Consider the following 236-residue polypeptide: MCYSANGNTFLIVDNTQKRIPEEKKPDFVRENVGDLDGVIFVELVDGKYFMDYYNRDGSMAAFCGNGARAFSQYLIDRGWIKEKEFTFLSRAGEIKVIVDDSIWVRMPGVSEKKEMKVDGYEGYFVVVGVPHFVMEVKGIDELDVEKLGRDLRYKTGANVDFYEVLPDRLKVRTYERGVERETKACGTGVTSVFVVYRDKTGAKEVKIQVPGGTLFLKEENGEIFLRGDVKRCSEE.

Residues asparagine 8 and asparagine 55 each coordinate substrate. Cysteine 64 serves as the catalytic Proton donor. Substrate contacts are provided by residues 65–66, asparagine 159, and 176–177; these read GN and ER. Catalysis depends on cysteine 186, which acts as the Proton acceptor. Residue 187–188 coordinates substrate; it reads GT.

Belongs to the diaminopimelate epimerase family. Probably forms homotrimers.

It is found in the cytoplasm. It catalyses the reaction (2S,6S)-2,6-diaminopimelate = meso-2,6-diaminopimelate. Its pathway is amino-acid biosynthesis; L-lysine biosynthesis via DAP pathway; DL-2,6-diaminopimelate from LL-2,6-diaminopimelate: step 1/1. Its function is as follows. Catalyzes the stereoinversion of LL-2,6-diaminopimelate (L,L-DAP) to meso-diaminopimelate (meso-DAP), a precursor of L-lysine and an essential component of the bacterial peptidoglycan. Also catalyzes the racemization of certain amino acids, including Lys, with low efficiency. The sequence is that of Diaminopimelate epimerase from Thermotoga maritima (strain ATCC 43589 / DSM 3109 / JCM 10099 / NBRC 100826 / MSB8).